We begin with the raw amino-acid sequence, 785 residues long: Tripartite terminase subunit 1 (785 aa).

The C3H1-type zinc finger occupies 197 to 225 (CAVCFEELCVTANQGATIARRLADRICNH). Disordered regions lie at residues 433–452 (GGAADAPKGGAGPDDDGDRV) and 457–489 (GARGLGAPGGGGEDEDRRRGPGGQGPETWGDIA). 696–703 (FASVYRCG) contributes to the ATP binding site.

Belongs to the herpesviridae TRM1 protein family. As to quaternary structure, associates with TRM2 and TRM3 to form the tripartite terminase complex. Interacts with portal protein.

It localises to the host nucleus. In terms of biological role, component of the molecular motor that translocates viral genomic DNA in empty capsid during DNA packaging. Forms a tripartite terminase complex together with TRM2 and TRM3 in the host cytoplasm. Once the complex reaches the host nucleus, it interacts with the capsid portal vertex. This portal forms a ring in which genomic DNA is translocated into the capsid. TRM1 carries an endonuclease activity that plays an important role for the cleavage of concatemeric viral DNA into unit length genomes. In Human herpesvirus 1 (strain 17) (HHV-1), this protein is Tripartite terminase subunit 1.